A 71-amino-acid polypeptide reads, in one-letter code: MNDLKLLRSKLSTETIEELYKNLNLLKKELFNLRFQQALGDLKNTSRFSLVKKSIARIKTELTKRANSEEY.

The protein belongs to the universal ribosomal protein uL29 family.

The protein is Large ribosomal subunit protein uL29 of Rickettsia africae (strain ESF-5).